The primary structure comprises 214 residues: Molybdenum cofactor guanylyltransferase (214 aa).

Residues 18-20, lysine 31, aspartate 77, and aspartate 112 each bind GTP; that span reads LAG. Position 112 (aspartate 112) interacts with Mg(2+).

This sequence belongs to the MobA family. Monomer. Mg(2+) serves as cofactor.

It is found in the cytoplasm. It carries out the reaction Mo-molybdopterin + GTP + H(+) = Mo-molybdopterin guanine dinucleotide + diphosphate. Transfers a GMP moiety from GTP to Mo-molybdopterin (Mo-MPT) cofactor (Moco or molybdenum cofactor) to form Mo-molybdopterin guanine dinucleotide (Mo-MGD) cofactor. The polypeptide is Molybdenum cofactor guanylyltransferase (Rhodopseudomonas palustris (strain HaA2)).